A 238-amino-acid chain; its full sequence is Probable transcriptional regulatory protein YcdB (238 aa).

The protein belongs to the TACO1 family. YeeN subfamily.

The protein resides in the cytoplasm. The protein is Probable transcriptional regulatory protein YcdB (ycdB) of Lactococcus lactis subsp. lactis (strain IL1403) (Streptococcus lactis).